Reading from the N-terminus, the 643-residue chain is UvrABC system protein C (643 aa).

A GIY-YIG domain is found at 25–104 (AEPGVYFMRD…IKQHQPHFNV (80 aa)). The 36-residue stretch at 214 to 249 (SELVELLEAQMLQAAENLEFEKAAKIRDQIRGLEGL) folds into the UVR domain.

It belongs to the UvrC family. In terms of assembly, interacts with UvrB in an incision complex.

The protein resides in the cytoplasm. The UvrABC repair system catalyzes the recognition and processing of DNA lesions. UvrC both incises the 5' and 3' sides of the lesion. The N-terminal half is responsible for the 3' incision and the C-terminal half is responsible for the 5' incision. The sequence is that of UvrABC system protein C from Synechococcus elongatus (strain ATCC 33912 / PCC 7942 / FACHB-805) (Anacystis nidulans R2).